We begin with the raw amino-acid sequence, 268 residues long: MARFLRLCTWLLALGSCLLATVQAECSQDCAKCSYRLVRPGDINFLACTLECEGQLPSFKIWETCKDLLQVSRPEFPWDNIDMYKDSSKQDESHLLAKKYGGFMKRYGGFMKKMDELYPMEPEEEANGGEILAKRYGGFMKKDADEGDTLANSSDLLKELLGTGDNRAKDSHQQESTNNDEDMSKRYGGFMRSLKRSPQLEDEAKELQKRYGGFMRRVGRPEWWMDYQKRYGGFLKRFAESLPSDEEGENYSKEVPEIEKRYGGFMRF.

Residues 1 to 24 (MARFLRLCTWLLALGSCLLATVQA) form the signal peptide. 3 cysteine pairs are disulfide-bonded: cysteine 26–cysteine 48, cysteine 30–cysteine 52, and cysteine 33–cysteine 65. The interval 163–184 (TGDNRAKDSHQQESTNNDEDMS) is disordered. 2 propeptides span residues 197–208 (SPQLEDEAKELQ) and 218–228 (VGRPEWWMDYQ). At serine 252 the chain carries Phosphoserine.

It belongs to the opioid neuropeptide precursor family. Proenkephalin-A is cleaved by CTSL to generate Met-enkephalin. Post-translationally, processed and degraded by ACE. In terms of processing, probably cleaved by ACE. Processed by ACE to generate Met-enkephalin in the nucleus accumbens of the brain. Post-translationally, the N-terminal domain contains 6 conserved cysteines thought to be involved in disulfide bonding and/or processing. In terms of tissue distribution, spermatogenic and somatic cells.

Its subcellular location is the cytoplasmic vesicle. It localises to the secretory vesicle. The protein resides in the chromaffin granule lumen. The protein localises to the secreted. In terms of biological role, neuropeptide that competes with and mimic the effects of opiate drugs. They play a role in a number of physiologic functions, including pain perception and responses to stress. Met-enkephalin-Arg-Phe neuropeptide acts as a strong ligand of Mu-type opioid receptor OPRM1. Met-enkephalin-Arg-Phe-binding to OPRM1 in the nucleus accumbens of the brain increases activation of OPRM1, leading to long-term synaptic depression of glutamate release. Its function is as follows. Increases glutamate release in the striatum and decreases GABA concentration in the striatum. Functionally, increases glutamate release in the striatum. The sequence is that of Proenkephalin-A (Penk) from Mus musculus (Mouse).